Here is a 332-residue protein sequence, read N- to C-terminus: Adenosine deaminase (332 aa).

Zn(2+) contacts are provided by H12 and H14. Substrate contacts are provided by H14, D16, and G170. H197 serves as a coordination point for Zn(2+). E200 functions as the Proton donor in the catalytic mechanism. Residue D278 coordinates Zn(2+).

Belongs to the metallo-dependent hydrolases superfamily. Adenosine and AMP deaminases family. Adenosine deaminase subfamily. Requires Zn(2+) as cofactor.

It catalyses the reaction adenosine + H2O + H(+) = inosine + NH4(+). It carries out the reaction 2'-deoxyadenosine + H2O + H(+) = 2'-deoxyinosine + NH4(+). Its function is as follows. Catalyzes the hydrolytic deamination of adenosine and 2-deoxyadenosine. This chain is Adenosine deaminase, found in Clostridium perfringens (strain 13 / Type A).